A 198-amino-acid chain; its full sequence is Succinate dehydrogenase [ubiquinone] cytochrome b subunit, mitochondrial (198 aa).

The transit peptide at Met-1 to Lys-50 directs the protein to the mitochondrion. The Mitochondrial matrix segment spans residues Asn-51–Ser-99. A ubiquinone is bound by residues Ser-93 and Arg-97. The helical transmembrane segment at Leu-100 to Leu-120 threads the bilayer. Topologically, residues Gly-121–Lys-139 are mitochondrial intermembrane. Residues Ile-140–Ala-160 form a helical membrane-spanning segment. His-156 contributes to the heme binding site. The Mitochondrial matrix portion of the chain corresponds to Ile-161–Lys-175. A helical membrane pass occupies residues Gly-176–Leu-196. Residues Thr-197–Leu-198 lie on the Mitochondrial intermembrane side of the membrane.

The protein belongs to the cytochrome b560 family. As to quaternary structure, forms part of complex II containing four subunits: a flavoprotein (FP), an iron-sulfur protein (IP) and a cytochrome b composed of two integral membrane proteins. Heme is required as a cofactor.

The protein resides in the mitochondrion inner membrane. The protein operates within carbohydrate metabolism; tricarboxylic acid cycle. Its function is as follows. Membrane-anchoring mono-heme cytochrome b subunit of succinate dehydrogenase (SDH) that is involved in system II of the mitochondrial electron transport chain and is responsible for transferring electrons from succinate to ubiquinone (coenzyme Q). SDH3 and SDH4 form the membrane dimer that anchors the catalytic dimer formed by SDH1 and SDH2 to the matrix surface of the mitochondrial inner membrane. Electrons originating from the catalytic dimer enter the membrane dimer for ubiquinone reduction. The sequence is that of Succinate dehydrogenase [ubiquinone] cytochrome b subunit, mitochondrial (SDH3) from Saccharomyces cerevisiae (strain ATCC 204508 / S288c) (Baker's yeast).